Reading from the N-terminus, the 63-residue chain is MKASELQGKDQAALTKELNDLLKAQFGLRMQIATQQLNNTSQLKKVRRDIARVKTVMNQKDAK.

This sequence belongs to the universal ribosomal protein uL29 family.

The chain is Large ribosomal subunit protein uL29 from Herminiimonas arsenicoxydans.